We begin with the raw amino-acid sequence, 201 residues long: Nucleoid occlusion factor SlmA (201 aa).

An HTH tetR-type domain is found at Lys14–Leu75. A DNA-binding region (H-T-H motif) is located at residues Thr38 to Phe57.

The protein belongs to the nucleoid occlusion factor SlmA family. Homodimer. Interacts with FtsZ.

It is found in the cytoplasm. The protein localises to the nucleoid. Functionally, required for nucleoid occlusion (NO) phenomenon, which prevents Z-ring formation and cell division over the nucleoid. Acts as a DNA-associated cell division inhibitor that binds simultaneously chromosomal DNA and FtsZ, and disrupts the assembly of FtsZ polymers. SlmA-DNA-binding sequences (SBS) are dispersed on non-Ter regions of the chromosome, preventing FtsZ polymerization at these regions. This is Nucleoid occlusion factor SlmA from Glaesserella parasuis serovar 5 (strain SH0165) (Haemophilus parasuis).